We begin with the raw amino-acid sequence, 563 residues long: Sulfite reductase [NADPH] hemoprotein beta-component (563 aa).

[4Fe-4S] cluster-binding residues include Cys427, Cys433, Cys472, and Cys476. Cys476 provides a ligand contact to siroheme.

It belongs to the nitrite and sulfite reductase 4Fe-4S domain family. As to quaternary structure, alpha(8)-beta(8). The alpha component is a flavoprotein, the beta component is a hemoprotein. Siroheme is required as a cofactor. Requires [4Fe-4S] cluster as cofactor.

It carries out the reaction hydrogen sulfide + 3 NADP(+) + 3 H2O = sulfite + 3 NADPH + 4 H(+). The protein operates within sulfur metabolism; hydrogen sulfide biosynthesis; hydrogen sulfide from sulfite (NADPH route): step 1/1. Component of the sulfite reductase complex that catalyzes the 6-electron reduction of sulfite to sulfide. This is one of several activities required for the biosynthesis of L-cysteine from sulfate. The polypeptide is Sulfite reductase [NADPH] hemoprotein beta-component (Acidithiobacillus ferrooxidans (strain ATCC 53993 / BNL-5-31) (Leptospirillum ferrooxidans (ATCC 53993))).